Consider the following 499-residue polypeptide: Lysine--tRNA ligase (499 aa).

Mg(2+) contacts are provided by E408 and E415.

The protein belongs to the class-II aminoacyl-tRNA synthetase family. As to quaternary structure, homodimer. The cofactor is Mg(2+).

Its subcellular location is the cytoplasm. The enzyme catalyses tRNA(Lys) + L-lysine + ATP = L-lysyl-tRNA(Lys) + AMP + diphosphate. This is Lysine--tRNA ligase from Thermoanaerobacter pseudethanolicus (strain ATCC 33223 / 39E) (Clostridium thermohydrosulfuricum).